The primary structure comprises 590 residues: DNA primase (590 aa).

A CHC2-type zinc finger spans residues 37–61 (CPFHKEKTPSFSVSPTKQFYHCFSC). The Toprim domain occupies 255-337 (GRILVVEGYM…DKSLHFLFLP (83 aa)). Mg(2+) is bound by residues Glu-261, Asp-305, and Asp-307.

The protein belongs to the DnaG primase family. Monomer. Interacts with DnaB. The cofactor is Zn(2+). Mg(2+) is required as a cofactor.

It carries out the reaction ssDNA + n NTP = ssDNA/pppN(pN)n-1 hybrid + (n-1) diphosphate.. Functionally, RNA polymerase that catalyzes the synthesis of short RNA molecules used as primers for DNA polymerase during DNA replication. The protein is DNA primase of Neisseria meningitidis serogroup B (strain ATCC BAA-335 / MC58).